A 147-amino-acid chain; its full sequence is Transcriptional regulator MraZ (147 aa).

2 consecutive SpoVT-AbrB domains span residues 5–50 (AVAL…PLTA) and 79–122 (AQEE…SDAG).

Belongs to the MraZ family. Forms oligomers.

It is found in the cytoplasm. The protein localises to the nucleoid. The protein is Transcriptional regulator MraZ of Azoarcus sp. (strain BH72).